The sequence spans 515 residues: C-glycoside 3-oxidase (515 aa).

An FAD-binding site is contributed by glutamate 41. Over residues 62–82 (ERAHAQRRSEGPHAREDDDRV) the composition is skewed to basic and acidic residues. A disordered region spans residues 62–90 (ERAHAQRRSEGPHAREDDDRVGGIVKSAQ). Residues serine 118, asparagine 120, methionine 124, threonine 129, alanine 131, and valine 237 each contribute to the FAD site. Residue histidine 444 is the Proton acceptor of the active site. FAD contacts are provided by asparagine 478 and threonine 490.

Belongs to the GMC oxidoreductase family. Monomer. Requires FAD as cofactor.

It catalyses the reaction isoorientin + O2 = 3''-dehydroisoorientin + H2O2. The enzyme catalyses mangiferin + O2 = 3'-dehydromangiferin + H2O2. FAD-dependent C-glycoside-metabolizing enzyme that participates in the degradation of certain C-glycosides by catalyzing the oxidation of the hydroxyl group at the C3 position of the sugar moiety. Shows oxidase activity toward C-glycosides such as isoorientin and mangiferin but cannot use carminic acid, puerarin, orientin or aloesin. Shows weak activity (100 to 1000-fold lower) with O-glycosides. Probably plays a crucial role in the metabolism of C-glycosides in nature. The polypeptide is C-glycoside 3-oxidase (Microbacterium trichothecenolyticum (Aureobacterium trichothecenolyticum)).